The sequence spans 404 residues: Transcription factor sem-2 (404 aa).

A DNA-binding region (HMG box) is located at residues 93–161; the sequence is IKRPMNAFMV…CHMQEYPDYK (69 aa). Disordered stretches follow at residues 158–218 and 321–359; these read PDYK…QFQN and HTSP…NSAG. Residues 177–199 show a composition bias toward low complexity; the sequence is QQPAQPQAPQQQQAPPRGASPQA. Composition is skewed to polar residues over residues 207–218 and 347–359; these read TDQQSETQQFQN and ASEQ…NSAG.

It localises to the nucleus. In terms of biological role, probable transcription factor required for embryogenesis, vulval development and cell fate specification of the postembryonic mesoderm (also known as the M lineage). Specifically, required for the specification of sex myoblast cells and their development into the muscles that are necessary for egg-laying. In addition, may be involved in RME GABAergic motor neuron progenitor cell fate specification. The sequence is that of Transcription factor sem-2 from Caenorhabditis elegans.